Reading from the N-terminus, the 214-residue chain is Histidine biosynthesis bifunctional protein HisIE (214 aa).

Residues 1–125 (MPATALSLPL…ESIEPPPADT (125 aa)) are phosphoribosyl-AMP cyclohydrolase. The segment at 126-214 (LSQVYNIVCQ…VYEQLQLRRR (89 aa)) is phosphoribosyl-ATP pyrophosphohydrolase.

It in the N-terminal section; belongs to the PRA-CH family. The protein in the C-terminal section; belongs to the PRA-PH family.

The protein resides in the cytoplasm. It catalyses the reaction 1-(5-phospho-beta-D-ribosyl)-ATP + H2O = 1-(5-phospho-beta-D-ribosyl)-5'-AMP + diphosphate + H(+). The enzyme catalyses 1-(5-phospho-beta-D-ribosyl)-5'-AMP + H2O = 1-(5-phospho-beta-D-ribosyl)-5-[(5-phospho-beta-D-ribosylamino)methylideneamino]imidazole-4-carboxamide. Its pathway is amino-acid biosynthesis; L-histidine biosynthesis; L-histidine from 5-phospho-alpha-D-ribose 1-diphosphate: step 2/9. It functions in the pathway amino-acid biosynthesis; L-histidine biosynthesis; L-histidine from 5-phospho-alpha-D-ribose 1-diphosphate: step 3/9. The polypeptide is Histidine biosynthesis bifunctional protein HisIE (Thermosynechococcus vestitus (strain NIES-2133 / IAM M-273 / BP-1)).